The primary structure comprises 148 residues: Protein NrdI (148 aa).

It belongs to the NrdI family.

In terms of biological role, probably involved in ribonucleotide reductase function. The chain is Protein NrdI from Corynebacterium glutamicum (strain R).